Reading from the N-terminus, the 86-residue chain is Defensin-like protein a (86 aa).

The signal sequence occupies residues 1-23 (MRCSVLFVVSYVIMSLLISHVQG). Cystine bridges form between C33–C81, C43–C67, C51–C76, and C65–C78.

The protein belongs to the DEFL family. As to expression, expressed specifically in anthers.

Its subcellular location is the secreted. Its function is as follows. Involved in self-incompatibility. The protein is Defensin-like protein a (SCRa) of Arabidopsis lyrata (Lyre-leaved rock-cress).